The sequence spans 782 residues: Zinc finger Y-chromosomal protein 1 (782 aa).

Disordered stretches follow at residues 211-233 and 360-386; these read ADLEGSSEVTMNAESGTDSSKLD and LNQDESGGLDRVPKQKSKKKKRPESKQ. A compositionally biased stretch (polar residues) spans 217–229; that stretch reads SEVTMNAESGTDS. The Nuclear localization signal motif lies at 372–382; it reads PKQKSKKKKRP. The span at 373 to 382 shows a compositional bias: basic residues; the sequence is KQKSKKKKRP. 13 consecutive C2H2-type zinc fingers follow at residues 403–425, 434–456, 466–488, 497–520, 526–548, 554–577, 583–605, 611–634, 640–662, 668–691, 697–719, 725–748, and 754–777; these read YPCMFCGKKFKTKRFLKRHTKNH, YHCTECDYSTNKKISLHNHMESH, TECDDCRKNLSHAGTLCTHKTMH, CKCKFCDYETAEQTLLNHHLLVVH, HICGECGKGFRHPSALKKHIRVH, YECQYCEYKSADSSNLKTHIKSKH, LKCGICLLTFSDNKEAQQHAVLH, HQCSHCNHKSSNSSDLKRHIISVH, HKCDMCSKGFHRPSELKKHVATH, HQCRHCDFNSPDPFLLSHHILSAH, FKCKRCKKEFQQQCELQTHMKTH, YQCEYCEYSTKDASGFKRHVISIH, and HSCDFCKKGFRRPSEKNQHIMRHH.

The protein belongs to the krueppel C2H2-type zinc-finger protein family. ZFX/ZFY subfamily.

The protein localises to the nucleus. Its function is as follows. Probable transcriptional activator. Binds to the consensus sequence 5'-AGGCCY-3'. The protein is Zinc finger Y-chromosomal protein 1 (Zfy1) of Mus musculus (Mouse).